The primary structure comprises 151 residues: D-aminoacyl-tRNA deacylase (151 aa).

The short motif at 137–138 (GP) is the Gly-cisPro motif, important for rejection of L-amino acids element.

It belongs to the DTD family. As to quaternary structure, homodimer.

It is found in the cytoplasm. The enzyme catalyses glycyl-tRNA(Ala) + H2O = tRNA(Ala) + glycine + H(+). It catalyses the reaction a D-aminoacyl-tRNA + H2O = a tRNA + a D-alpha-amino acid + H(+). Its function is as follows. An aminoacyl-tRNA editing enzyme that deacylates mischarged D-aminoacyl-tRNAs. Also deacylates mischarged glycyl-tRNA(Ala), protecting cells against glycine mischarging by AlaRS. Acts via tRNA-based rather than protein-based catalysis; rejects L-amino acids rather than detecting D-amino acids in the active site. By recycling D-aminoacyl-tRNA to D-amino acids and free tRNA molecules, this enzyme counteracts the toxicity associated with the formation of D-aminoacyl-tRNA entities in vivo and helps enforce protein L-homochirality. The chain is D-aminoacyl-tRNA deacylase from Listeria monocytogenes serotype 4a (strain HCC23).